The chain runs to 273 residues: Lactose transport system permease protein LacG (273 aa).

6 helical membrane-spanning segments follow: residues Tyr15–Gly35, Ile77–Glu97, Val110–Met130, Gly134–Phe154, Phe182–Leu204, and Gly240–Met260. Residues Phe71 to Met260 enclose the ABC transmembrane type-1 domain.

Belongs to the binding-protein-dependent transport system permease family. MalFG subfamily.

It localises to the cell inner membrane. Its function is as follows. Part of the binding-protein-dependent transport system for lactose. Probably responsible for the translocation of the substrate across the membrane. This is Lactose transport system permease protein LacG (lacG) from Rhizobium radiobacter (Agrobacterium tumefaciens).